The primary structure comprises 325 residues: Delta(1)-pyrroline-2-carboxylate reductase (325 aa).

Belongs to the ornithine cyclodeaminase/mu-crystallin family.

It catalyses the reaction L-proline + NAD(+) = 1-pyrroline-2-carboxylate + NADH + H(+). The enzyme catalyses L-proline + NADP(+) = 1-pyrroline-2-carboxylate + NADPH + H(+). Its function is as follows. Catalyzes the reduction of Delta(1)-pyrroline-2-carboxylate (Pyr2C) to L-proline, using preferentially NADPH over NADH as the electron donor. Is likely involved in a degradation pathway that converts trans-3-hydroxy-L-proline (t3LHyp) to L-proline. This chain is Delta(1)-pyrroline-2-carboxylate reductase, found in Bacillus thuringiensis subsp. konkukian (strain 97-27).